We begin with the raw amino-acid sequence, 470 residues long: Uronate isomerase (470 aa).

Belongs to the metallo-dependent hydrolases superfamily. Uronate isomerase family.

It carries out the reaction D-glucuronate = D-fructuronate. The catalysed reaction is aldehydo-D-galacturonate = keto-D-tagaturonate. The protein operates within carbohydrate metabolism; pentose and glucuronate interconversion. This chain is Uronate isomerase, found in Cronobacter sakazakii (strain ATCC BAA-894) (Enterobacter sakazakii).